Consider the following 292-residue polypeptide: VGLAKGLRKVGTIYPLVVAVLPDVPPEHRRILVEQGCVVREIEPVYPPENHTEFAMAYYVINYSKLRIWEFVEYSKMIYLDGDIQVFENIDHLFDLENGYFYAVMDCFCEKTWSHTPQYQIGYCQQSPKRVHWPKQLGPKPPLYFNAGMFVYEPSLPTYHDLLHTLKITPPTPFAEQDFLNMFLRDVYRPIPNVYNLVLAMLWRHPENVNLEAVKVVHYCAAGSKPWRYTGEEENMDRNDIKMLVNKWRDIYDDEMLDYNAVADPAADGLQLTAVLTEAAGVVRFIPAPSAA.

K65 is a catalytic residue. Mn(2+)-binding residues include D81, D83, and H218.

It belongs to the glycosyltransferase 8 family. Galactosyltransferase subfamily. Requires a divalent metal cation as cofactor. Present in phloem-associated intermediary cells. Weakly expressed in leaves.

Its subcellular location is the cytoplasm. The catalysed reaction is myo-inositol + UDP-alpha-D-galactose = alpha-D-galactosyl-(1-&gt;3)-1D-myo-inositol + UDP + H(+). In terms of biological role, may promote plant stress tolerance. Galactinol synthase mainly involved in the biosynthesis of transport raffinose family oligosaccharides (RFOs) that function as osmoprotectants. In Ajuga reptans (Bugle), this protein is Galactinol synthase 2 (GOLS2).